Reading from the N-terminus, the 270-residue chain is ATP synthase subunit a (270 aa).

Helical transmembrane passes span 29–49, 87–107, 108–128, 140–160, 182–202, 220–240, and 241–261; these read VDTFSISLVLGFLFAAVFAMV, IAPLALTIFCWVFLMNFMDLF, PVDLFPMAAQWIGYTFFGLEP, DVNATFAMSLSVLILIVGFSI, PVGAIILAPLNFAFQLVELAA, LIFILIALLPWGLQWVLGAPW, and AIFHILIITLQAFVFMMLTIV.

This sequence belongs to the ATPase A chain family. F-type ATPases have 2 components, CF(1) - the catalytic core - and CF(0) - the membrane proton channel. CF(1) has five subunits: alpha(3), beta(3), gamma(1), delta(1), epsilon(1). CF(0) has three main subunits: a(1), b(2) and c(9-12). The alpha and beta chains form an alternating ring which encloses part of the gamma chain. CF(1) is attached to CF(0) by a central stalk formed by the gamma and epsilon chains, while a peripheral stalk is formed by the delta and b chains.

It localises to the cell inner membrane. Its function is as follows. Key component of the proton channel; it plays a direct role in the translocation of protons across the membrane. This is ATP synthase subunit a from Chromobacterium violaceum (strain ATCC 12472 / DSM 30191 / JCM 1249 / CCUG 213 / NBRC 12614 / NCIMB 9131 / NCTC 9757 / MK).